Here is a 369-residue protein sequence, read N- to C-terminus: S-adenosyl-L-methionine-dependent uroporphyrinogen III methyltransferase, chloroplastic (369 aa).

Residues 1–28 (MALVQRIPISSSSIRNWQQARTNLTPIC) constitute a chloroplast transit peptide. S-adenosyl-L-homocysteine-binding positions include P124, 200 to 202 (GGD), 230 to 231 (TA), M284, and T341.

It belongs to the precorrin methyltransferase family. As to expression, mostly expressed in leaves, and, to a lower extent, in stems, flowers and siliques.

It localises to the plastid. The protein localises to the chloroplast. The enzyme catalyses uroporphyrinogen III + 2 S-adenosyl-L-methionine = precorrin-2 + 2 S-adenosyl-L-homocysteine + H(+). It functions in the pathway porphyrin-containing compound metabolism; siroheme biosynthesis; precorrin-2 from uroporphyrinogen III: step 1/1. Its function is as follows. Essential protein required for siroheme biosynthesis. Catalyzes the two successive C-2 and C-7 methylation reactions involved in the conversion of uroporphyrinogen III to precorrin-2 via the intermediate formation of precorrin-1. It is a step in the biosynthesis of siroheme. Promotes nitrogen and sulfur assimilation as well as photosynthesis efficiency by triggering chlorophyll, nitrite reductase (NiR) and sulfite reductase (SiR) biosynthesis. This chain is S-adenosyl-L-methionine-dependent uroporphyrinogen III methyltransferase, chloroplastic, found in Arabidopsis thaliana (Mouse-ear cress).